The primary structure comprises 467 residues: ATP synthase subunit beta (467 aa).

Position 152–159 (152–159 (GGAGVGKT)) interacts with ATP.

Belongs to the ATPase alpha/beta chains family. In terms of assembly, F-type ATPases have 2 components, CF(1) - the catalytic core - and CF(0) - the membrane proton channel. CF(1) has five subunits: alpha(3), beta(3), gamma(1), delta(1), epsilon(1). CF(0) has three main subunits: a(1), b(2) and c(9-12). The alpha and beta chains form an alternating ring which encloses part of the gamma chain. CF(1) is attached to CF(0) by a central stalk formed by the gamma and epsilon chains, while a peripheral stalk is formed by the delta and b chains.

It is found in the cell membrane. It catalyses the reaction ATP + H2O + 4 H(+)(in) = ADP + phosphate + 5 H(+)(out). Functionally, produces ATP from ADP in the presence of a proton gradient across the membrane. The catalytic sites are hosted primarily by the beta subunits. The polypeptide is ATP synthase subunit beta (Caldicellulosiruptor saccharolyticus (strain ATCC 43494 / DSM 8903 / Tp8T 6331)).